The following is a 184-amino-acid chain: ATP synthase subunit b, chloroplastic (184 aa).

The chain crosses the membrane as a helical span at residues 27-49; sequence LATNPINLSVVLGVLIFFGKGVL.

It belongs to the ATPase B chain family. F-type ATPases have 2 components, F(1) - the catalytic core - and F(0) - the membrane proton channel. F(1) has five subunits: alpha(3), beta(3), gamma(1), delta(1), epsilon(1). F(0) has four main subunits: a(1), b(1), b'(1) and c(10-14). The alpha and beta chains form an alternating ring which encloses part of the gamma chain. F(1) is attached to F(0) by a central stalk formed by the gamma and epsilon chains, while a peripheral stalk is formed by the delta, b and b' chains.

The protein localises to the plastid. It is found in the chloroplast thylakoid membrane. Functionally, f(1)F(0) ATP synthase produces ATP from ADP in the presence of a proton or sodium gradient. F-type ATPases consist of two structural domains, F(1) containing the extramembraneous catalytic core and F(0) containing the membrane proton channel, linked together by a central stalk and a peripheral stalk. During catalysis, ATP synthesis in the catalytic domain of F(1) is coupled via a rotary mechanism of the central stalk subunits to proton translocation. In terms of biological role, component of the F(0) channel, it forms part of the peripheral stalk, linking F(1) to F(0). The polypeptide is ATP synthase subunit b, chloroplastic (Platanus occidentalis (Sycamore)).